A 335-amino-acid polypeptide reads, in one-letter code: NADH-quinone oxidoreductase subunit H (335 aa).

8 helical membrane-spanning segments follow: residues 11 to 31 (VILT…CGAL), 81 to 101 (MIFT…FVVI), 114 to 134 (IGLL…LFAG), 154 to 174 (VSYE…VGSF), 187 to 207 (LWFI…GVAV), 238 to 258 (FFVG…TLFF), 270 to 290 (QVPF…FILL), and 307 to 327 (WKFC…VVLY).

It belongs to the complex I subunit 1 family. In terms of assembly, NDH-1 is composed of 13 different subunits. Subunits NuoA, H, J, K, L, M, N constitute the membrane sector of the complex.

It localises to the cell inner membrane. It catalyses the reaction a quinone + NADH + 5 H(+)(in) = a quinol + NAD(+) + 4 H(+)(out). Its function is as follows. NDH-1 shuttles electrons from NADH, via FMN and iron-sulfur (Fe-S) centers, to quinones in the respiratory chain. The immediate electron acceptor for the enzyme in this species is believed to be ubiquinone. Couples the redox reaction to proton translocation (for every two electrons transferred, four hydrogen ions are translocated across the cytoplasmic membrane), and thus conserves the redox energy in a proton gradient. This subunit may bind ubiquinone. This is NADH-quinone oxidoreductase subunit H from Pseudomonas entomophila (strain L48).